The primary structure comprises 387 residues: uncharacterized protein (387 aa).

An N-terminal signal peptide occupies residues 1-27; it reads MKKWMITIAMLILAGIALFVFISPLKS.

This is an uncharacterized protein from Bacillus subtilis (strain 168).